The primary structure comprises 120 residues: uncharacterized protein (120 aa).

The signal sequence occupies residues 1–27 (MPKIGVSLIVLIMLIIFLAGCNKNEQN).

This is an uncharacterized protein from Bacillus subtilis (strain 168).